A 248-amino-acid chain; its full sequence is Isopentenyl phosphate kinase (248 aa).

An ATP-binding site is contributed by 7-11; it reads KLGGS. Substrate is bound at residue glycine 49. Glycine 50 lines the ATP pocket. Substrate contacts are provided by histidine 54 and glycine 152. Positions 209 and 213 each coordinate ATP.

This sequence belongs to the isopentenyl phosphate kinase family. In terms of assembly, homodimer.

The catalysed reaction is isopentenyl phosphate + ATP = isopentenyl diphosphate + ADP. Its function is as follows. Catalyzes the phosphorylation of isopentenyl phosphate (IP) to isopentenyl diphosphate (IPP). Functions in an alternate mevalonate (MVA) pathway leading to IPP, a key precursor for the biosynthesis of isoprenoid compounds such as archaeal membrane lipids. This Haloferax volcanii (strain ATCC 29605 / DSM 3757 / JCM 8879 / NBRC 14742 / NCIMB 2012 / VKM B-1768 / DS2) (Halobacterium volcanii) protein is Isopentenyl phosphate kinase.